The primary structure comprises 194 residues: MDFEQLLDKSLNKVREEIKTELSKSLDEAIKLLNEGHTKIIQEYTQRINELITKTKEEIEGEKARLEVENKRTLLVEKEYWINKVYERVLEKIGEVVKTKEYKDAIQSILNKEIKEMEGEKITVYCSPNDKSTVEKVVGNNKNVTIKTDDKMLGGIRIYYEGSGLTRDFSLKLILDQVFDSMRGKISDMLFGGK.

This sequence belongs to the V-ATPase E subunit family. In terms of assembly, has multiple subunits with at least A(3), B(3), C, D, E, F, H, I and proteolipid K(x).

It localises to the cell membrane. Functionally, component of the A-type ATP synthase that produces ATP from ADP in the presence of a proton gradient across the membrane. The sequence is that of A-type ATP synthase subunit E from Saccharolobus islandicus (strain M.16.27) (Sulfolobus islandicus).